The primary structure comprises 193 residues: Interferon type A1/A2 (193 aa).

Residues Met-1 to Ala-31 form the signal peptide. Cystine bridges form between Cys-32–Cys-129, Cys-61–Cys-155, and Cys-68–Cys-168. Asn-65, Asn-71, Asn-108, and Asn-186 each carry an N-linked (GlcNAc...) asparagine glycan.

It belongs to the alpha/beta interferon family.

The protein resides in the secreted. Functionally, has antiviral activities. The chain is Interferon type A1/A2 (IFNA1) from Gallus gallus (Chicken).